Reading from the N-terminus, the 494-residue chain is Glutamate--tRNA ligase (494 aa).

The 'HIGH' region signature appears at 9 to 19; sequence PSPTGPLHIGS. The short motif at 249-253 is the 'KMSKS' region element; sequence KLSKR. Residue Lys252 coordinates ATP.

The protein belongs to the class-I aminoacyl-tRNA synthetase family. Glutamate--tRNA ligase type 1 subfamily. In terms of assembly, monomer.

The protein localises to the cytoplasm. The enzyme catalyses tRNA(Glu) + L-glutamate + ATP = L-glutamyl-tRNA(Glu) + AMP + diphosphate. Functionally, catalyzes the attachment of glutamate to tRNA(Glu) in a two-step reaction: glutamate is first activated by ATP to form Glu-AMP and then transferred to the acceptor end of tRNA(Glu). This Azobacteroides pseudotrichonymphae genomovar. CFP2 protein is Glutamate--tRNA ligase.